Reading from the N-terminus, the 87-residue chain is Putative defensin-like protein 84 (87 aa).

Residues 1 to 27 (MTTKMVSSHRLLTLMVFALLLIPMISG) form the signal peptide. Disulfide bonds link C32/C73, C36/C54, C42/C71, and C46/C72.

The protein belongs to the DEFL family.

The protein resides in the secreted. The chain is Putative defensin-like protein 84 from Arabidopsis thaliana (Mouse-ear cress).